Here is a 660-residue protein sequence, read N- to C-terminus: Arginine--tRNA ligase, cytoplasmic (660 aa).

The segment at 1 to 72 is could be involved in the assembly of the multisynthetase complex; sequence MELPVCFYEE…LEEKKKSSKS (72 aa). Residues 200 to 202, His-211, Tyr-384, Asp-388, and Gln-412 each bind L-arginine; that span reads SPN. The 'HIGH' region signature appears at 201–212; it reads PNIAKEMHVGHL. The segment at 529-543 is interaction with tRNA; that stretch reads NTAAYLLYAYTRIRS.

This sequence belongs to the class-I aminoacyl-tRNA synthetase family. Monomer; also part of a multisubunit complex that groups tRNA ligases for Arg, Asp, Glu, Gln, Ile, Leu, Lys, Met and Pro.

It localises to the cytoplasm. It is found in the cytosol. The enzyme catalyses tRNA(Arg) + L-arginine + ATP = L-arginyl-tRNA(Arg) + AMP + diphosphate. Functionally, forms part of a macromolecular complex that catalyzes the attachment of specific amino acids to cognate tRNAs during protein synthesis. The chain is Arginine--tRNA ligase, cytoplasmic (rars1) from Xenopus tropicalis (Western clawed frog).